Reading from the N-terminus, the 240-residue chain is Adenosine 5'-phosphosulfate reductase (240 aa).

4 residues coordinate [4Fe-4S] cluster: C125, C126, C208, and C211. The active-site Nucleophile; cysteine thiosulfonate intermediate is the C234.

This sequence belongs to the PAPS reductase family. CysH subfamily. [4Fe-4S] cluster serves as cofactor.

Its subcellular location is the cytoplasm. The catalysed reaction is [thioredoxin]-disulfide + sulfite + AMP + 2 H(+) = adenosine 5'-phosphosulfate + [thioredoxin]-dithiol. It participates in sulfur metabolism; hydrogen sulfide biosynthesis; sulfite from sulfate. Catalyzes the formation of sulfite from adenosine 5'-phosphosulfate (APS) using thioredoxin as an electron donor. This Oceanobacillus iheyensis (strain DSM 14371 / CIP 107618 / JCM 11309 / KCTC 3954 / HTE831) protein is Adenosine 5'-phosphosulfate reductase.